The primary structure comprises 498 residues: ATP synthase subunit beta, chloroplastic (498 aa).

172–179 contacts ATP; sequence GGAGVGKT.

This sequence belongs to the ATPase alpha/beta chains family. As to quaternary structure, F-type ATPases have 2 components, CF(1) - the catalytic core - and CF(0) - the membrane proton channel. CF(1) has five subunits: alpha(3), beta(3), gamma(1), delta(1), epsilon(1). CF(0) has four main subunits: a(1), b(1), b'(1) and c(9-12).

The protein localises to the plastid. It localises to the chloroplast thylakoid membrane. The catalysed reaction is ATP + H2O + 4 H(+)(in) = ADP + phosphate + 5 H(+)(out). In terms of biological role, produces ATP from ADP in the presence of a proton gradient across the membrane. The catalytic sites are hosted primarily by the beta subunits. The polypeptide is ATP synthase subunit beta, chloroplastic (Montinia caryophyllacea (Wild clove bush)).